The primary structure comprises 267 residues: tRNA (guanine-N(1)-)-methyltransferase (267 aa).

S-adenosyl-L-methionine-binding positions include glycine 112 and 131–136; that span reads IGDYIL. Residues 245–259 are compositionally biased toward basic and acidic residues; that stretch reads DRRKEKNSYEDEFNR. Positions 245–267 are disordered; sequence DRRKEKNSYEDEFNRRNYKRSTS.

This sequence belongs to the RNA methyltransferase TrmD family. As to quaternary structure, homodimer.

Its subcellular location is the cytoplasm. It carries out the reaction guanosine(37) in tRNA + S-adenosyl-L-methionine = N(1)-methylguanosine(37) in tRNA + S-adenosyl-L-homocysteine + H(+). Specifically methylates guanosine-37 in various tRNAs. The protein is tRNA (guanine-N(1)-)-methyltransferase of Spiroplasma kunkelii.